We begin with the raw amino-acid sequence, 374 residues long: 4-hydroxybenzoate polyprenyltransferase, mitochondrial (374 aa).

A mitochondrion-targeting transit peptide spans 1 to 63; it reads MLRLGGAGLV…RALSLSAAAV (63 aa). At 64–83 the chain is on the mitochondrial matrix side; it reads VNSAPRPLQPYLRLMRLDKP. Residues 84–104 form a helical membrane-spanning segment; it reads IGTWLLYLPCTWSIGLAADPG. The Mitochondrial intermembrane portion of the chain corresponds to 105-108; that stretch reads CFPD. A helical transmembrane segment spans residues 109-129; sequence WYMLSLFGTGAILMRGAGCTI. Over 130–153 the chain is Mitochondrial matrix; it reads NDMWDRDFDKKVERTANRPIAAGD. Residues 154–174 form a helical membrane-spanning segment; sequence ISAFQSFVFLGAQLTLALGVL. Residues 175-176 lie on the Mitochondrial intermembrane side of the membrane; the sequence is LH. The chain crosses the membrane as a helical span at residues 177–197; sequence LNYYSIAMGAASLLLVVTYPL. The Mitochondrial matrix segment spans residues 198–200; sequence MKR. A helical transmembrane segment spans residues 201–221; that stretch reads VTFWPQLALGLTFNWGALLGW. Residues 222 to 230 lie on the Mitochondrial intermembrane side of the membrane; that stretch reads SAVKGSCDP. Residues 231 to 251 traverse the membrane as a helical segment; the sequence is AVCLPLYFSGVMWTLIYDTIY. Residues 252-277 lie on the Mitochondrial matrix side of the membrane; sequence AHQDKKDDALIGLKSTALLFRENTKQ. The helical transmembrane segment at 278 to 298 threads the bilayer; that stretch reads WLSGFGVAMVGALSLVGASSG. The Mitochondrial intermembrane segment spans residues 299–300; sequence QT. The helical transmembrane segment at 301–321 threads the bilayer; the sequence is LPYYAAVAAVGAHLAHQIYTV. Topologically, residues 322–332 are mitochondrial matrix; sequence DIHRAEDCWEK. A helical membrane pass occupies residues 333-353; that stretch reads FTSNRTVGLLLFLGIVLGNLY. The Mitochondrial intermembrane portion of the chain corresponds to 354–374; it reads KDKPDETKGVDAVGEESERTS.

Belongs to the UbiA prenyltransferase family. The cofactor is Mg(2+).

It localises to the mitochondrion inner membrane. It catalyses the reaction an all-trans-polyprenyl diphosphate + 4-hydroxybenzoate = a 4-hydroxy-3-(all-trans-polyprenyl)benzoate + diphosphate. The enzyme catalyses all-trans-decaprenyl diphosphate + 4-hydroxybenzoate = 4-hydroxy-3-(all-trans-decaprenyl)benzoate + diphosphate. It carries out the reaction all-trans-nonaprenyl diphosphate + 4-hydroxybenzoate = 4-hydroxy-3-(all-trans-nonaprenyl)benzoate + diphosphate. The protein operates within cofactor biosynthesis; ubiquinone biosynthesis. Functionally, mediates the second step in the final reaction sequence of coenzyme Q (CoQ) biosynthesis. Catalyzes the prenylation of para-hydroxybenzoate (PHB) with an all-trans polyprenyl group (such as all-trans-nonaprenyl diphosphate). The length of the polyprenyl side chain varies depending on the species, in humans, the side chain is comprised of 10 isoprenyls producing CoQ10 (also known as ubiquinone), whereas rodents predominantly generate CoQ9. However, this specificity is not complete, human tissues have low amounts of CoQ9 and rodent organs contain some CoQ10. Plays a central role in the biosynthesis of CoQ9. CoQ9 is a vital molecule that transports electrons from mitochondrial respiratory chain complexes. CoQs also function as cofactors for uncoupling protein and plays a role as regulator of the extracellularly-induced ceramide-dependent apoptotic pathway. Regulates mitochondrial permeability transition pore (mPTP) opening and ROS production (pivotal events in cell death) in a tissue specific manner. This chain is 4-hydroxybenzoate polyprenyltransferase, mitochondrial, found in Rattus norvegicus (Rat).